Consider the following 273-residue polypeptide: Dermonecrotic toxin LsaSicTox-alphaIB1ai (273 aa).

Residue H5 is part of the active site. E25 and D27 together coordinate Mg(2+). H41 serves as the catalytic Nucleophile. Disulfide bonds link C45-C51 and C47-C190. Residue D85 coordinates Mg(2+).

This sequence belongs to the arthropod phospholipase D family. Class II subfamily. Mg(2+) is required as a cofactor. In terms of tissue distribution, expressed by the venom gland.

The protein resides in the secreted. The catalysed reaction is an N-(acyl)-sphingosylphosphocholine = an N-(acyl)-sphingosyl-1,3-cyclic phosphate + choline. It catalyses the reaction an N-(acyl)-sphingosylphosphoethanolamine = an N-(acyl)-sphingosyl-1,3-cyclic phosphate + ethanolamine. It carries out the reaction a 1-acyl-sn-glycero-3-phosphocholine = a 1-acyl-sn-glycero-2,3-cyclic phosphate + choline. The enzyme catalyses a 1-acyl-sn-glycero-3-phosphoethanolamine = a 1-acyl-sn-glycero-2,3-cyclic phosphate + ethanolamine. Its function is as follows. Dermonecrotic toxins cleave the phosphodiester linkage between the phosphate and headgroup of certain phospholipids (sphingolipid and lysolipid substrates), forming an alcohol (often choline) and a cyclic phosphate. This toxin acts on sphingomyelin (SM). It may also act on ceramide phosphoethanolamine (CPE), lysophosphatidylcholine (LPC) and lysophosphatidylethanolamine (LPE), but not on lysophosphatidylserine (LPS), and lysophosphatidylglycerol (LPG). It acts by transphosphatidylation, releasing exclusively cyclic phosphate products as second products. Induces dermonecrosis, hemolysis, increased vascular permeability, edema, inflammatory response, and platelet aggregation. This is Dermonecrotic toxin LsaSicTox-alphaIB1ai from Loxosceles sabina (Tucson recluse spider).